The sequence spans 487 residues: MESEAAATVQATRPRRAPRTPVTAILTDKRRRKPKSNNESQLPFLLQQSQKATVDDTYSQWKTLLPILYDSFVNHTLVWPSLSCRWGPQLEQAGSKTQRLYLSEQTNGSVPNTLVIANCETVNRQLNEKAHSPFVKKYKTIIHPGEVNRIRELPQNSKIVATHTDSPDILIWNTETQPDRYAVLGAPDSRPDLLLIGHQDDAEFALAMCPTEPFVLSGGKDKSVILWNIQDHITMAGSDSKSPGSSFKQTGEGSDKTGGPSVGPRGIYNGHKDTVEDVAFCPSSAQEFCSVGDDSCLMLWDARTGTSPAMKVEKAHDADLHCVDWNPHDNNLILTGSADNTVRVFDRRNLTSNGVGSPVYKFEGHRAAVLCVQWSPDKSSVFGSSAEDGLLNIWDCDRVGKKSERATKTPDGLFFQHAGHRDKVVDFHWSLLNPWTIVSVSDNCESIGGGGTLQIWRMSDLIYRPEDEVLTELEKFKSHVFTCTSKS.

An N-acetylmethionine modification is found at methionine 1. Residues 1–12 are compositionally biased toward low complexity; sequence MESEAAATVQAT. A disordered region spans residues 1–44; that stretch reads MESEAAATVQATRPRRAPRTPVTAILTDKRRRKPKSNNESQLPF. Residues 14–21 carry the Nuclear localization signal motif; that stretch reads PRRAPRTP. WD repeat units lie at residues 142 to 182, 197 to 237, 270 to 310, 315 to 355, 364 to 404, and 419 to 466; these read IHPG…DRYA, GHQD…TMAG, GHKD…SPAM, AHDA…SNGV, GHRA…KKSE, and GHRD…YRPE. The segment at 236 to 268 is disordered; the sequence is AGSDSKSPGSSFKQTGEGSDKTGGPSVGPRGIY. The segment covering 237–252 has biased composition (polar residues); the sequence is GSDSKSPGSSFKQTGE. Positions 288-303 match the DWD box motif; the sequence is FCSVGDDSCLMLWDAR.

It belongs to the WD repeat RBAP46/RBAP48/MSI1 family. Interacts with AHL16. Interacts with LHP1, PDP2, PDP3 and PDP6. Component of the PRC2 (polycomb repressive complex 2) complex which regulates histone methylation on histone H3K27.

The protein localises to the nucleus. Core histone-binding subunit that may target chromatin assembly factors, chromatin remodeling factors and histone deacetylases to their histone substrates in a manner that is regulated by nucleosomal DNA. Acts together with PDP1 and MSI4/FVE to regulate the function of the PRC2 complex on FLC. The chain is WD-40 repeat-containing protein MSI5 from Arabidopsis thaliana (Mouse-ear cress).